Consider the following 140-residue polypeptide: Seminal plasma protein A3 (140 aa).

A signal peptide spans 1-25; sequence MALRLGLFLIWAGVSMFLQLDPVNG. 2 Fibronectin type-II domains span residues 49–93 and 94–140; these read TKDN…YCTK and NDYA…WKYC. Cystine bridges form between Cys-54-Cys-78, Cys-68-Cys-91, Cys-99-Cys-125, and Cys-113-Cys-140.

It belongs to the seminal plasma protein family.

The protein localises to the secreted. The BSP-A proteins from seminal plasma exhibit both simulatory and inhibitory actions on the release of pituitary gonadotropins. The exact function of these proteins is not known. The protein is Seminal plasma protein A3 of Bos taurus (Bovine).